A 334-amino-acid polypeptide reads, in one-letter code: DNA-directed RNA polymerase subunit alpha (334 aa).

The alpha N-terminal domain (alpha-NTD) stretch occupies residues M1–E232. An alpha C-terminal domain (alpha-CTD) region spans residues Q267 to V334.

It belongs to the RNA polymerase alpha chain family. As to quaternary structure, in plastids the minimal PEP RNA polymerase catalytic core is composed of four subunits: alpha, beta, beta', and beta''. When a (nuclear-encoded) sigma factor is associated with the core the holoenzyme is formed, which can initiate transcription.

It localises to the plastid. The protein resides in the chloroplast. The enzyme catalyses RNA(n) + a ribonucleoside 5'-triphosphate = RNA(n+1) + diphosphate. DNA-dependent RNA polymerase catalyzes the transcription of DNA into RNA using the four ribonucleoside triphosphates as substrates. This chain is DNA-directed RNA polymerase subunit alpha, found in Pisum sativum (Garden pea).